An 85-amino-acid polypeptide reads, in one-letter code: Beta-toxin BmKAS (85 aa).

The N-terminal stretch at 1–19 is a signal peptide; sequence MKTVIFLIVSSLLLIGVKT. In terms of domain architecture, LCN-type CS-alpha/beta spans 20–82; it reads DNGYLLDKYT…LWNYNTNKCN (63 aa). 4 cysteine pairs are disulfide-bonded: C31–C81, C35–C56, C42–C63, and C46–C65.

As to expression, expressed by the venom gland.

It is found in the secreted. Its function is as follows. Beta toxins bind voltage-independently at site-4 of sodium channels (Nav) and shift the voltage of activation toward more negative potentials thereby affecting sodium channel activation and promoting spontaneous and repetitive firing. It binds to distinct receptor sites of mammal and insect voltage-gated sodium channels. It displays antinociceptive effect in rat models, which is due to its specific modulation of sodium channels of sensory neurons. It also significantly stimulates the binding of [3H]-ryanodine to ryanodine receptors on the sarcoplasmic reticulum of the skeletal muscle through an indirect mechanism. And it promotes noradrenaline release from the rat hippocampus slice. This chain is Beta-toxin BmKAS, found in Olivierus martensii (Manchurian scorpion).